The chain runs to 451 residues: UDP-N-acetylmuramate--L-alanine ligase (451 aa).

ATP is bound at residue 110–116 (GTHGKTT).

Belongs to the MurCDEF family.

The protein localises to the cytoplasm. It catalyses the reaction UDP-N-acetyl-alpha-D-muramate + L-alanine + ATP = UDP-N-acetyl-alpha-D-muramoyl-L-alanine + ADP + phosphate + H(+). The protein operates within cell wall biogenesis; peptidoglycan biosynthesis. Cell wall formation. This chain is UDP-N-acetylmuramate--L-alanine ligase, found in Francisella tularensis subsp. tularensis (strain WY96-3418).